The following is a 234-amino-acid chain: Synaptogyrin-1 (234 aa).

Met-1 is subject to N-acetylmethionine. Residues 1–23 (MEGGAYGAGKAGGAFDPYTLVRQ) are Cytoplasmic-facing. An MARVEL domain is found at 20 to 173 (LVRQPHTILR…QAVLAFQRYQ (154 aa)). A helical membrane pass occupies residues 24–44 (PHTILRVVSWVFSIVVFGSIV). The Lumenal portion of the chain corresponds to 45–71 (NEGYLNNPEEEEEFCIYNRNPNACSYG). Residues 72–92 (VTVGVLAFLTCLVYLALDVYF) form a helical membrane-spanning segment. Over 93-104 (PQISSVKDRKKA) the chain is Cytoplasmic. A helical transmembrane segment spans residues 105 to 125 (VLSDIGVSAFWAFFWFVGFCF). Over 126 to 148 (LANQWQVSKPKDNPLNEGTDAAR) the chain is Lumenal. A helical transmembrane segment spans residues 149 to 169 (AAIAFSFFSIFTWAGQAVLAF). Residues 170–234 (QRYQIGADSA…EPQGYQSQGY (65 aa)) are Cytoplasmic-facing. The segment at 201-234 (EPSAGSDPTGMGGTYQHPANAFDAEPQGYQSQGY) is disordered.

The protein belongs to the synaptogyrin family. As to expression, nervous system (at protein level).

It is found in the cytoplasmic vesicle. It localises to the secretory vesicle. The protein resides in the synaptic vesicle membrane. The protein localises to the melanosome. Its function is as follows. May play a role in regulated exocytosis. Modulates the localization of synaptophysin/SYP into synaptic-like microvesicles and may therefore play a role in synaptic-like microvesicle formation and/or maturation. Involved in the regulation of short-term and long-term synaptic plasticity. This chain is Synaptogyrin-1, found in Rattus norvegicus (Rat).